The following is a 46-amino-acid chain: Large ribosomal subunit protein bL36 (46 aa).

It belongs to the bacterial ribosomal protein bL36 family.

The sequence is that of Large ribosomal subunit protein bL36 from Escherichia coli O7:K1 (strain IAI39 / ExPEC).